Reading from the N-terminus, the 266-residue chain is Diphthine synthase (266 aa).

Residues L9, D84, V87, 112–113 (SI), L169, A210, and H235 each bind S-adenosyl-L-methionine.

This sequence belongs to the diphthine synthase family. As to quaternary structure, homodimer.

It carries out the reaction 2-[(3S)-amino-3-carboxypropyl]-L-histidyl-[translation elongation factor 2] + 3 S-adenosyl-L-methionine = diphthine-[translation elongation factor 2] + 3 S-adenosyl-L-homocysteine + 3 H(+). It participates in protein modification; peptidyl-diphthamide biosynthesis. Functionally, S-adenosyl-L-methionine-dependent methyltransferase that catalyzes the trimethylation of the amino group of the modified target histidine residue in translation elongation factor 2 (EF-2), to form an intermediate called diphthine. The three successive methylation reactions represent the second step of diphthamide biosynthesis. This is Diphthine synthase from Methanosarcina acetivorans (strain ATCC 35395 / DSM 2834 / JCM 12185 / C2A).